Here is a 313-residue protein sequence, read N- to C-terminus: 4-diphosphocytidyl-2-C-methyl-D-erythritol kinase (313 aa).

Residue lysine 11 is part of the active site. Residue 99 to 109 participates in ATP binding; that stretch reads PVAAGLAGGST. Residue aspartate 141 is part of the active site.

It belongs to the GHMP kinase family. IspE subfamily.

It catalyses the reaction 4-CDP-2-C-methyl-D-erythritol + ATP = 4-CDP-2-C-methyl-D-erythritol 2-phosphate + ADP + H(+). It functions in the pathway isoprenoid biosynthesis; isopentenyl diphosphate biosynthesis via DXP pathway; isopentenyl diphosphate from 1-deoxy-D-xylulose 5-phosphate: step 3/6. Catalyzes the phosphorylation of the position 2 hydroxy group of 4-diphosphocytidyl-2C-methyl-D-erythritol. This chain is 4-diphosphocytidyl-2-C-methyl-D-erythritol kinase, found in Microcystis aeruginosa (strain NIES-843 / IAM M-2473).